We begin with the raw amino-acid sequence, 222 residues long: N-(5'-phosphoribosyl)anthranilate isomerase (222 aa).

The protein belongs to the TrpF family.

The enzyme catalyses N-(5-phospho-beta-D-ribosyl)anthranilate = 1-(2-carboxyphenylamino)-1-deoxy-D-ribulose 5-phosphate. The protein operates within amino-acid biosynthesis; L-tryptophan biosynthesis; L-tryptophan from chorismate: step 3/5. This is N-(5'-phosphoribosyl)anthranilate isomerase from Rhizobium etli (strain ATCC 51251 / DSM 11541 / JCM 21823 / NBRC 15573 / CFN 42).